The following is a 124-amino-acid chain: Large ribosomal subunit protein bL12 (124 aa).

The segment covering methionine 102–glutamate 116 has biased composition (basic and acidic residues). A disordered region spans residues methionine 102 to lysine 124.

Belongs to the bacterial ribosomal protein bL12 family. As to quaternary structure, homodimer. Part of the ribosomal stalk of the 50S ribosomal subunit. Forms a multimeric L10(L12)X complex, where L10 forms an elongated spine to which 2 to 4 L12 dimers bind in a sequential fashion. Binds GTP-bound translation factors.

Its function is as follows. Forms part of the ribosomal stalk which helps the ribosome interact with GTP-bound translation factors. Is thus essential for accurate translation. This Chromohalobacter salexigens (strain ATCC BAA-138 / DSM 3043 / CIP 106854 / NCIMB 13768 / 1H11) protein is Large ribosomal subunit protein bL12.